The primary structure comprises 99 residues: UPF0473 protein LEUM_0559 (99 aa).

It belongs to the UPF0473 family.

The sequence is that of UPF0473 protein LEUM_0559 from Leuconostoc mesenteroides subsp. mesenteroides (strain ATCC 8293 / DSM 20343 / BCRC 11652 / CCM 1803 / JCM 6124 / NCDO 523 / NBRC 100496 / NCIMB 8023 / NCTC 12954 / NRRL B-1118 / 37Y).